The sequence spans 343 residues: Lumican (343 aa).

The first 18 residues, 1 to 18 (MTLNSLPIFLVLISGIFC), serve as a signal peptide directing secretion. The residue at position 19 (Gln-19) is a Pyrrolidone carboxylic acid. A sulfotyrosine mark is found at Tyr-20 and Tyr-22. Residues 31–69 (DPFGPSTAVCAPECNCPLSYPTAMYCDNLKLKTIPIVPS) form the LRRNT domain. LRR repeat units follow at residues 70 to 91 (GIKY…TFDN), 94 to 117 (DLQW…VFSK), 120 to 140 (NLKK…PLPK), 141 to 162 (TLDD…ALEG), 165 to 186 (NLTV…GAFK), 190 to 211 (SLLY…LPHS), 212 to 232 (LLML…YFQG), and 235 to 255 (TLQY…PGNV). N-linked (GlcNAc...) (keratan sulfate) asparagine glycosylation occurs at Asn-91. Asn-130 carries an N-linked (GlcNAc...) (keratan sulfate) asparagine glycan. Asn-165 carries an N-linked (GlcNAc...) (keratan sulfate) asparagine glycan. Asn-257 is a glycosylation site (N-linked (GlcNAc...) (keratan sulfate) asparagine). LRR repeat units follow at residues 260-281 (SLVE…SENL), 282-301 (ENFY…SFCK), and 310-330 (KITH…PQEM). Cys-300 and Cys-333 are disulfide-bonded. A glycan (N-linked (GlcNAc...) asparagine) is linked at Asn-320.

It belongs to the small leucine-rich proteoglycan (SLRP) family. SLRP class II subfamily. In terms of assembly, binds to laminin. Post-translationally, contains keratan sulfate.

It is found in the secreted. The protein localises to the extracellular space. Its subcellular location is the extracellular matrix. This Coturnix japonica (Japanese quail) protein is Lumican (LUM).